The primary structure comprises 494 residues: Alpha-amylase-related protein (494 aa).

The N-terminal stretch at 1-20 (MIKFALALTLCLAGASLSLA) is a signal peptide. Q21 is subject to Pyrrolidone carboxylic acid. C48 and C104 are disulfide-bonded. Ca(2+)-binding residues include N118, Q169, and D178. C157 and C171 are disulfide-bonded. R206 is a chloride binding site. The active-site Nucleophile is D208. H212 is a Ca(2+) binding site. E245 serves as the catalytic Proton donor. The chloride site is built by N308 and R343. 3 disulfides stabilise this stretch: C376–C382, C418–C441, and C448–C460.

Belongs to the glycosyl hydrolase 13 family. As to quaternary structure, monomer. Ca(2+) is required as a cofactor. The cofactor is chloride.

The protein localises to the secreted. The catalysed reaction is Endohydrolysis of (1-&gt;4)-alpha-D-glucosidic linkages in polysaccharides containing three or more (1-&gt;4)-alpha-linked D-glucose units.. The chain is Alpha-amylase-related protein (Amyrel) from Drosophila serrata (Fruit fly).